Here is a 558-residue protein sequence, read N- to C-terminus: Acylase ACY 1 proenzyme (558 aa).

Threonine 368 functions as the Nucleophile in the catalytic mechanism.

The protein belongs to the gamma-glutamyltransferase family. As to quaternary structure, dimer of two non-identical chains processed from the same precursor.

It catalyses the reaction (7R)-7-(4-carboxybutanamido)cephalosporanate + H2O = (7R)-7-aminocephalosporanate + glutarate. The catalysed reaction is an N-terminal (5-L-glutamyl)-[peptide] + an alpha-amino acid = 5-L-glutamyl amino acid + an N-terminal L-alpha-aminoacyl-[peptide]. It carries out the reaction glutathione + H2O = L-cysteinylglycine + L-glutamate. The enzyme catalyses an S-substituted glutathione + H2O = an S-substituted L-cysteinylglycine + L-glutamate. Functionally, besides the cephalosporin acylase I activity which converts GL-7ACA into 7-ACA; this enzyme displays some gamma glutamyltranspeptidase activity. The polypeptide is Acylase ACY 1 proenzyme (acyI) (Pseudomonas sp. (strain V22)).